Consider the following 198-residue polypeptide: Nucleoid occlusion factor SlmA (198 aa).

The region spanning arginine 9–leucine 70 is the HTH tetR-type domain. Positions threonine 33–phenylalanine 52 form a DNA-binding region, H-T-H motif. Residues alanine 113 to lysine 144 are a coiled coil.

This sequence belongs to the nucleoid occlusion factor SlmA family. Homodimer. Interacts with FtsZ.

It is found in the cytoplasm. The protein localises to the nucleoid. In terms of biological role, required for nucleoid occlusion (NO) phenomenon, which prevents Z-ring formation and cell division over the nucleoid. Acts as a DNA-associated cell division inhibitor that binds simultaneously chromosomal DNA and FtsZ, and disrupts the assembly of FtsZ polymers. SlmA-DNA-binding sequences (SBS) are dispersed on non-Ter regions of the chromosome, preventing FtsZ polymerization at these regions. This is Nucleoid occlusion factor SlmA from Pectobacterium carotovorum subsp. carotovorum (strain PC1).